A 95-amino-acid polypeptide reads, in one-letter code: Large ribosomal subunit protein eL43 (95 aa).

A C4-type zinc finger spans residues 38-59 (CPDCGSEAVSREGTGIWQCGKC).

This sequence belongs to the eukaryotic ribosomal protein eL43 family. The cofactor is Zn(2+).

This Halobacterium salinarum (strain ATCC 29341 / DSM 671 / R1) protein is Large ribosomal subunit protein eL43.